The sequence spans 264 residues: 3-methyl-2-oxobutanoate hydroxymethyltransferase (264 aa).

Mg(2+) is bound by residues D45 and D84. 3-methyl-2-oxobutanoate contacts are provided by residues 45–46, D84, and K112; that span reads DS. E114 provides a ligand contact to Mg(2+). E181 functions as the Proton acceptor in the catalytic mechanism.

Belongs to the PanB family. As to quaternary structure, homodecamer; pentamer of dimers. Mg(2+) serves as cofactor.

It localises to the cytoplasm. It catalyses the reaction 3-methyl-2-oxobutanoate + (6R)-5,10-methylene-5,6,7,8-tetrahydrofolate + H2O = 2-dehydropantoate + (6S)-5,6,7,8-tetrahydrofolate. It functions in the pathway cofactor biosynthesis; (R)-pantothenate biosynthesis; (R)-pantoate from 3-methyl-2-oxobutanoate: step 1/2. Functionally, catalyzes the reversible reaction in which hydroxymethyl group from 5,10-methylenetetrahydrofolate is transferred onto alpha-ketoisovalerate to form ketopantoate. The protein is 3-methyl-2-oxobutanoate hydroxymethyltransferase of Aeromonas salmonicida (strain A449).